Here is a 515-residue protein sequence, read N- to C-terminus: Iridoid oxidase (515 aa).

Helical transmembrane passes span Ser8–Val28 and Ala180–Leu200. A heme-binding site is contributed by Cys455.

This sequence belongs to the cytochrome P450 family. Expressed in the leaf internal phloem-associated parenchyma (IPAP) inside the mesophyll.

The protein localises to the endoplasmic reticulum membrane. The catalysed reaction is (+)-cis-trans-nepetalactol + 3 reduced [NADPH--hemoprotein reductase] + 3 O2 = 7-deoxyloganetate + 3 oxidized [NADPH--hemoprotein reductase] + 4 H2O + 4 H(+). The protein operates within alkaloid biosynthesis. Functionally, component of the seco-iridoid and derivatives monoterpenoid indole alkaloids (MIAs, e.g. vincristine, quinine, and strychnine) biosynthesis pathway. Catalyzes the conversion of cis-trans-nepetalactol (iridodial) into 7-deoxyloganetic acid. Also converts iridotrial into 7-deoxyloganetic acid. This is Iridoid oxidase from Catharanthus roseus (Madagascar periwinkle).